A 95-amino-acid polypeptide reads, in one-letter code: Putative regulatory protein Daud_1598 (95 aa).

The protein belongs to the RemA family.

This Desulforudis audaxviator (strain MP104C) protein is Putative regulatory protein Daud_1598.